A 512-amino-acid polypeptide reads, in one-letter code: Lysine--tRNA ligase (512 aa).

Glutamate 408 and glutamate 415 together coordinate Mg(2+).

It belongs to the class-II aminoacyl-tRNA synthetase family. Homodimer. Requires Mg(2+) as cofactor.

The protein localises to the cytoplasm. It catalyses the reaction tRNA(Lys) + L-lysine + ATP = L-lysyl-tRNA(Lys) + AMP + diphosphate. The chain is Lysine--tRNA ligase from Prochlorococcus marinus (strain MIT 9312).